The sequence spans 340 residues: Probable D,D-dipeptide transport system permease protein DdpB (340 aa).

Over 1–11 (MTFWSILRQRC) the chain is Periplasmic. Residues 12-32 (WGLVLVVAGVCVITFIISHLI) traverse the membrane as a helical segment. Residues 33–104 (PGDPARLLAG…IFFPATLELA (72 aa)) lie on the Cytoplasmic side of the membrane. An ABC transmembrane type-1 domain is found at 97-327 (FPATLELAFG…LVNLVVDLLY (231 aa)). Residues 105–125 (FGALLLALLIGIPLGILSAVW) form a helical membrane-spanning segment. Residues 126 to 135 (RNRWLDHLVR) lie on the Periplasmic side of the membrane. Residues 136-156 (IMAITGISTPAFWLGLGVIVL) form a helical membrane-spanning segment. Topologically, residues 157–199 (FYGHLQILPGGGRLDDWLDPPTHVTGFYLLDALLEGNGEVFFN) are cytoplasmic. Residues 200-220 (ALQHLILPALTLAFVHLGIVA) form a helical membrane-spanning segment. Topologically, residues 221–246 (RQIRSAMLEQLSEDYIRTARASGLPG) are periplasmic. Residues 247–269 (WYIVLCYALPNALIPSITVLGLA) traverse the membrane as a helical segment. At 270-279 (LGDLLYGAVL) the chain is on the cytoplasmic side. Residues 280–300 (TETVFAWPGMGAWVVTSIQAL) traverse the membrane as a helical segment. Residue Asp-301 is a topological domain, periplasmic. Residues 302 to 322 (FPAVMGFAVVVSFAYVLVNLV) form a helical membrane-spanning segment. The Cytoplasmic segment spans residues 323-340 (VDLLYLWIDPRIGRGGGE).

This sequence belongs to the binding-protein-dependent transport system permease family. OppBC subfamily. As to quaternary structure, the complex is composed of two ATP-binding proteins (DdpD and DdpF), two transmembrane proteins (DdpB and DdpC) and a solute-binding protein (DdpA).

The protein localises to the cell inner membrane. Functionally, part of the ABC transporter complex DdpABCDF, which is probably involved in D,D-dipeptide transport. Probably responsible for the translocation of the substrate across the membrane. The sequence is that of Probable D,D-dipeptide transport system permease protein DdpB (ddpB) from Escherichia coli (strain K12).